The sequence spans 458 residues: PH domain-containing protein DDB_G0274775 (458 aa).

A PH domain is found at 15 to 112; sequence PSDREGWLTK…WMESIKRNLD (98 aa). A disordered region spans residues 111 to 154; sequence LDGEGGMKSGGNDIVSSPKINSEPTPKVNQNGSAPEKSSLSSPR. Positions 124 to 142 are enriched in polar residues; it reads IVSSPKINSEPTPKVNQNG. The span at 143-154 shows a compositional bias: low complexity; the sequence is SAPEKSSLSSPR.

In Dictyostelium discoideum (Social amoeba), this protein is PH domain-containing protein DDB_G0274775.